A 394-amino-acid chain; its full sequence is Cysteine protease ATG4B (394 aa).

Cysteine 74 acts as the Nucleophile in catalysis. Active-site residues include aspartate 280 and histidine 282. The short motif at phenylalanine 389–leucine 392 is the LIR element.

Belongs to the peptidase C54 family.

The protein resides in the cytoplasm. Its subcellular location is the cytosol. It is found in the cytoplasmic vesicle. The protein localises to the autophagosome. It localises to the endoplasmic reticulum. The protein resides in the mitochondrion. It catalyses the reaction [protein]-C-terminal L-amino acid-glycyl-phosphatidylethanolamide + H2O = [protein]-C-terminal L-amino acid-glycine + a 1,2-diacyl-sn-glycero-3-phosphoethanolamine. The catalysed reaction is [protein]-C-terminal L-amino acid-glycyl-phosphatidylserine + H2O = [protein]-C-terminal L-amino acid-glycine + a 1,2-diacyl-sn-glycero-3-phospho-L-serine. Cysteine protease that plays a key role in autophagy by mediating both proteolytic activation and delipidation of ATG8 family proteins. Required for canonical autophagy (macroautophagy), non-canonical autophagy as well as for mitophagy. The protease activity is required for proteolytic activation of ATG8 family proteins: cleaves the C-terminal amino acid of ATG8 proteins to reveal a C-terminal glycine. Exposure of the glycine at the C-terminus is essential for ATG8 proteins conjugation to phosphatidylethanolamine (PE) and insertion to membranes, which is necessary for autophagy. Protease activity is also required to counteract formation of high-molecular weight conjugates of ATG8 proteins (ATG8ylation): acts as a deubiquitinating-like enzyme that removes ATG8 conjugated to other proteins, such as ATG3. In addition to the protease activity, also mediates delipidation of ATG8 family proteins. Catalyzes delipidation of PE-conjugated forms of ATG8 proteins during macroautophagy. Also involved in non-canonical autophagy, a parallel pathway involving conjugation of ATG8 proteins to single membranes at endolysosomal compartments, by catalyzing delipidation of ATG8 proteins conjugated to phosphatidylserine (PS). The chain is Cysteine protease ATG4B from Danio rerio (Zebrafish).